Here is a 408-residue protein sequence, read N- to C-terminus: NADH-quinone oxidoreductase subunit D (408 aa).

It belongs to the complex I 49 kDa subunit family. NDH-1 is composed of 14 different subunits. Subunits NuoB, C, D, E, F, and G constitute the peripheral sector of the complex.

It localises to the cell inner membrane. The enzyme catalyses a quinone + NADH + 5 H(+)(in) = a quinol + NAD(+) + 4 H(+)(out). NDH-1 shuttles electrons from NADH, via FMN and iron-sulfur (Fe-S) centers, to quinones in the respiratory chain. The immediate electron acceptor for the enzyme in this species is believed to be ubiquinone. Couples the redox reaction to proton translocation (for every two electrons transferred, four hydrogen ions are translocated across the cytoplasmic membrane), and thus conserves the redox energy in a proton gradient. This is NADH-quinone oxidoreductase subunit D from Campylobacter jejuni subsp. jejuni serotype O:23/36 (strain 81-176).